Consider the following 256-residue polypeptide: Undecaprenyl-diphosphatase 2 (256 aa).

8 consecutive transmembrane segments (helical) span residues 1 to 21 (MDIF…FLPI), 38 to 58 (ATAT…LAVL), 70 to 90 (LNLW…AFIF), 97 to 117 (LFNV…FLLL), 134 to 154 (VTYK…IPGT), 175 to 195 (AEFS…YDLL), 208 to 228 (ALAV…KLFI), and 236 to 256 (FVSF…IAYV).

This sequence belongs to the UppP family.

It is found in the cell inner membrane. The enzyme catalyses di-trans,octa-cis-undecaprenyl diphosphate + H2O = di-trans,octa-cis-undecaprenyl phosphate + phosphate + H(+). Its function is as follows. Catalyzes the dephosphorylation of undecaprenyl diphosphate (UPP). Confers resistance to bacitracin. The polypeptide is Undecaprenyl-diphosphatase 2 (Pseudoalteromonas translucida (strain TAC 125)).